Reading from the N-terminus, the 338-residue chain is Ketol-acid reductoisomerase (NADP(+)) (338 aa).

The 181-residue stretch at 1-181 (MKVFYDKDCD…GGGRAGIIET (181 aa)) folds into the KARI N-terminal Rossmann domain. Residues 24 to 27 (YGSQ), Arg47, and Ser52 each bind NADP(+). His107 is an active-site residue. Gly133 contributes to the NADP(+) binding site. A KARI C-terminal knotted domain is found at 182-327 (NFREETETDL…GKLRAMMPWI (146 aa)). Mg(2+) is bound by residues Asp190, Glu194, Glu226, and Glu230. Ser251 lines the substrate pocket.

The protein belongs to the ketol-acid reductoisomerase family. The cofactor is Mg(2+).

The catalysed reaction is (2R)-2,3-dihydroxy-3-methylbutanoate + NADP(+) = (2S)-2-acetolactate + NADPH + H(+). It carries out the reaction (2R,3R)-2,3-dihydroxy-3-methylpentanoate + NADP(+) = (S)-2-ethyl-2-hydroxy-3-oxobutanoate + NADPH + H(+). It participates in amino-acid biosynthesis; L-isoleucine biosynthesis; L-isoleucine from 2-oxobutanoate: step 2/4. The protein operates within amino-acid biosynthesis; L-valine biosynthesis; L-valine from pyruvate: step 2/4. Functionally, involved in the biosynthesis of branched-chain amino acids (BCAA). Catalyzes an alkyl-migration followed by a ketol-acid reduction of (S)-2-acetolactate (S2AL) to yield (R)-2,3-dihydroxy-isovalerate. In the isomerase reaction, S2AL is rearranged via a Mg-dependent methyl migration to produce 3-hydroxy-3-methyl-2-ketobutyrate (HMKB). In the reductase reaction, this 2-ketoacid undergoes a metal-dependent reduction by NADPH to yield (R)-2,3-dihydroxy-isovalerate. This is Ketol-acid reductoisomerase (NADP(+)) from Bordetella pertussis (strain Tohama I / ATCC BAA-589 / NCTC 13251).